The following is a 255-amino-acid chain: Transcription factor CAULIFLOWER (255 aa).

One can recognise an MADS-box domain in the interval 1–61 (MGRGRVELKR…GKLFEYSSES (61 aa)). Positions 90-180 (QTNWSMEYSR…TKQIKERENI (91 aa)) constitute a K-box domain. A coiled-coil region spans residues 90–198 (QTNWSMEYSR…EQLNRSVDDV (109 aa)).

In terms of assembly, homodimer capable of binding to CArG-box sequences. In terms of tissue distribution, expressed in young flower primordia.

Its subcellular location is the nucleus. Functionally, probable transcription factor that promotes early floral meristem identity in synergy with APETALA1, FRUITFULL and LEAFY. Is required subsequently for the transition of an inflorescence meristem into a floral meristem. Seems to be partially redundant to the function of APETALA1. Positively regulates the APETALA1 and LEAFY expression. The sequence is that of Transcription factor CAULIFLOWER (CAL) from Arabidopsis thaliana (Mouse-ear cress).